Consider the following 202-residue polypeptide: U-Kazal-Dg21.2 (202 aa).

Positions 1-20 (MKYFLWSAVTIFAIVNVVGA) are cleaved as a signal peptide. Residues 21-87 (KNSDFDPRCL…SFCQVEEDFD (67 aa)) constitute a propeptide that is removed on maturation. Kazal-like domains are found at residues 23-77 (SDFD…KTLM), 85-140 (DFDS…ICRN), and 148-202 (IDPK…KGEC). 5 cysteine pairs are disulfide-bonded: Cys29–Cys62, Cys33–Cys55, Cys91–Cys124, Cys95–Cys117, and Cys103–Cys138. An N-linked (GlcNAc...) asparagine glycan is attached at Asn140. The propeptide occupies 142-202 (SFKSELIDPK…NWTLIRKGEC (61 aa)). Disulfide bonds link Cys154–Cys187, Cys158–Cys180, and Cys166–Cys202. Residue Asn193 is glycosylated (N-linked (GlcNAc...) asparagine).

In terms of tissue distribution, expressed by the venom gland.

The protein localises to the secreted. May act as a serine protease inhibitor, since it possess the kazal serine protease inhibitor signature. The recombinant peptide does not produce toxic effects on insects. This chain is U-Kazal-Dg21.2, found in Dolopus genitalis (Giant Australian assassin fly).